The following is a 161-amino-acid chain: UPF0262 protein Meso_0189 (161 aa).

This sequence belongs to the UPF0262 family.

The protein is UPF0262 protein Meso_0189 of Chelativorans sp. (strain BNC1).